The primary structure comprises 127 residues: Snaclec macrovipecetin subunit beta (127 aa).

3 disulfide bridges follow: C4/C15, C32/C121, and C98/C113. The region spanning 11 to 122 (YEGHCYKVFD…CSRTYKFVCK (112 aa)) is the C-type lectin domain.

Heterodimer of subunits alpha and beta; disulfide-linked. In terms of tissue distribution, expressed by the venom gland.

It is found in the secreted. Its function is as follows. Interferes with one step of hemostasis (modulation of platelet aggregation, or coagulation cascade, for example). This chain is Snaclec macrovipecetin subunit beta, found in Macrovipera lebetinus (Levantine viper).